We begin with the raw amino-acid sequence, 710 residues long: MSESDGAFKSPSLPPSHHAPAPMSPEKIRAPAEQMDGPVEGVIDEIETAEVQAEKESKISVQAPALHYEVPPWACEPDPAHKFQFEILKEGKLIASYDLSNRKNSTFVVIGRIKPGCDLLMEHPSISRYHCILQYGNDKMSKTGKGWHIFELGSTHGSRMNKKRLPPKQYIRTRVGFIFQFGESTRILNFVGPEEDSEPEWDCSPTEMKLRKHKKELEAKLRAAAAQEMIDDEKREKEEEGCGWGMDYGEDEKPLTTVETDAHLMEDREAYYNQDPKKALQKFFEREGFDMNFEFSEQGQGHTHKWVCSIELPVEIDGVDRAFTASATVSTSKKDAQIQCALDACRILDTYNVLRKSNTKLRMQRKTLEANDYYDEDDDLYLDRTGQLEKQREKRKQWAEEGFGHKRTETDTYESLCRKLEESKKEIIECQKHLDELSAGTKKSRTIDQGGDVLDDYIRQLEKSGGAGDDAKTKMEKSKWRQKLMAATHESQKLEKLVKIAKPAVVKGLEQLETTAANDRQAFLKKLMGVRARKEIDQTPSQGPGPSTSATLPATVAPTSTKAVEVEHEKKMTPLKVEKEIAASLDSSEIKNSLPAVDEPSSVKDEVSEETPQKEAFGSKVQKRVAQWEEELEAEKEELAKKQKLEAEEEAKKKVQRVRRRDIEKKIAGSEDYGAGVEDRDEKYSTWMPPNADQSEAKQDALRAKFAGRY.

Residues 1–40 form a disordered region; it reads MSESDGAFKSPSLPPSHHAPAPMSPEKIRAPAEQMDGPVE. Residues 15 to 25 show a composition bias toward low complexity; it reads PSHHAPAPMSP. One can recognise an FHA domain in the interval 108–165; sequence VVIGRIKPGCDLLMEHPSISRYHCILQYGNDKMSKTGKGWHIFELGSTHGSRMNKKRL. Coiled coils occupy residues 206–240, 409–440, and 471–502; these read TEMKLRKHKKELEAKLRAAAAQEMIDDEKREKEEE, ETDTYESLCRKLEESKKEIIECQKHLDELSAG, and AKTKMEKSKWRQKLMAATHESQKLEKLVKIAK. Positions 230 to 250 are disordered; that stretch reads IDDEKREKEEEGCGWGMDYGE. Disordered regions lie at residues 535–560, 591–619, and 671–710; these read EIDQTPSQGPGPSTSATLPATVAPTS, KNSLPAVDEPSSVKDEVSEETPQKEAFGS, and EDYGAGVEDRDEKYSTWMPPNADQSEAKQDALRAKFAGRY. Residues 538–560 show a composition bias toward polar residues; sequence QTPSQGPGPSTSATLPATVAPTS. Residues 613–661 adopt a coiled-coil conformation; the sequence is QKEAFGSKVQKRVAQWEEELEAEKEELAKKQKLEAEEEAKKKVQRVRRR.

This is an uncharacterized protein from Caenorhabditis elegans.